A 496-amino-acid polypeptide reads, in one-letter code: Cytochrome P450 71AV8 (496 aa).

The chain crosses the membrane as a helical span at residues 3–23; the sequence is ISIPTTLGLAVIIFIIFKLLT. C432 is a heme binding site.

Belongs to the cytochrome P450 family. Requires heme as cofactor.

The protein resides in the membrane. Valencene oxidase, which preferentially hydroylates the C2 position of (+)-valencene in the trans-orientation, producing trans-nootkatol that can be further oxidized to (+)-nootkatone. Can also catalyze the three-step conversion of germacrene A to germacra-1(10),4,11(13)-trien-12-oic acid and the partial conversion of the non-natural substrate amorpha-4,11-diene into artemisinic alcohol and artemisinic aldehyde. This is Cytochrome P450 71AV8 (CYP71AV8) from Cichorium intybus (Chicory).